Here is a 566-residue protein sequence, read N- to C-terminus: Malate synthase, glyoxysomal (566 aa).

Arg-179 functions as the Proton acceptor in the catalytic mechanism. The Proton donor role is filled by Asp-465. Residues 564–566 carry the Microbody targeting signal motif; the sequence is SRL.

It belongs to the malate synthase family.

Its subcellular location is the glyoxysome. The catalysed reaction is glyoxylate + acetyl-CoA + H2O = (S)-malate + CoA + H(+). The protein operates within carbohydrate metabolism; glyoxylate cycle; (S)-malate from isocitrate: step 2/2. This Raphanus sativus (Radish) protein is Malate synthase, glyoxysomal (MLS).